A 908-amino-acid chain; its full sequence is ATP-dependent DNA helicase DDX31 (908 aa).

The interval 55–165 (KNENNLNNNK…EESNAIESNS (111 aa)) is disordered. Positions 56–122 (NENNLNNNKN…NSNNNNLNKK (67 aa)) are enriched in low complexity. Residues 124 to 144 (TFLEKKIQQEQKQKELKELKG) are compositionally biased toward basic and acidic residues. The Q motif signature appears at 207 to 236 (MNWGSLQLSETLVRNLVGHMKHEKPTHIQE). In terms of domain architecture, Helicase ATP-binding spans 239–422 (ITPILKGNDA…SLSLTSPVYI (184 aa)). 252–259 (AQTGSGKT) serves as a coordination point for ATP. Residues 363 to 366 (DEAD) carry the DEAD box motif. The Helicase C-terminal domain maps to 518 to 738 (DKERGVKRTK…QLESQVHDLQ (221 aa)). Basic and acidic residues predominate over residues 519 to 537 (KERGVKRTKKEQIKQDKLI). Disordered regions lie at residues 519-590 (KERG…KEAT) and 872-908 (RNERDEADKNSNPKEIKEKKRRLYDKKIESNKKFKSK). A compositionally biased stretch (acidic residues) spans 553-580 (ESDDEESDNDDSDDSDSNNSDSETDEEK). Basic and acidic residues-rich tracts occupy residues 872–889 (RNERDEADKNSNPKEIKE) and 896–908 (DKKIESNKKFKSK).

The protein belongs to the DEAD box helicase family. DDX31/DBP7 subfamily.

It is found in the nucleus. Its subcellular location is the nucleolus. It catalyses the reaction ATP + H2O = ADP + phosphate + H(+). Functionally, may have DNA helicase activity and RNA helicase activity. Probably have ssDNA and RNA dependent ATPase activity. In Dictyostelium discoideum (Social amoeba), this protein is ATP-dependent DNA helicase DDX31 (ddx31).